We begin with the raw amino-acid sequence, 367 residues long: Putative heat shock 70 kDa protein 7 (367 aa).

The protein belongs to the heat shock protein 70 family.

The protein is Putative heat shock 70 kDa protein 7 (HSPA7) of Homo sapiens (Human).